Reading from the N-terminus, the 240-residue chain is Ribosomal RNA small subunit methyltransferase G (240 aa).

S-adenosyl-L-methionine contacts are provided by residues G79, F84, 130-131 (AE), and R149.

This sequence belongs to the methyltransferase superfamily. RNA methyltransferase RsmG family.

The protein localises to the cytoplasm. In terms of biological role, specifically methylates the N7 position of a guanine in 16S rRNA. In Desulforamulus reducens (strain ATCC BAA-1160 / DSM 100696 / MI-1) (Desulfotomaculum reducens), this protein is Ribosomal RNA small subunit methyltransferase G.